Consider the following 538-residue polypeptide: Syncytin-2 (538 aa).

The first 15 residues, 1 to 15, serve as a signal peptide directing secretion; sequence MGLLLLVLILTPLLA. The Extracellular portion of the chain corresponds to 16–478; it reads AHRHPDFPLL…GWLNWEGTWK (463 aa). The CXXC motif lies at 43–46; the sequence is CWLC. Cystine bridges form between Cys-43-Cys-46, Cys-43-Cys-439, and Cys-431-Cys-438. 8 N-linked (GlcNAc...) asparagine glycosylation sites follow: Asn-133, Asn-146, Asn-177, Asn-220, Asn-241, Asn-247, Asn-312, and Asn-332. Residues 354-374 form a fusion peptide region; it reads FIPLLAGLGIIAGTGTGIAGI. The CKS-17 motif lies at 414 to 430; the sequence is LQNRRGLDMLTAAQGGI. The short motif at 431-439 is the CX6CC element; that stretch reads CLALDEKCC. A glycan (N-linked (GlcNAc...) asparagine) is linked at Asn-443. The chain crosses the membrane as a helical span at residues 479-499; sequence WFSWVLPFTGPLVSLLLLLLF. Residues 500 to 538 lie on the Cytoplasmic side of the membrane; it reads GPCLLNLITQFVLSRLQAIKLQTNLSAGCRPHNIQESPF.

Belongs to the gamma type-C retroviral envelope protein family. HERV class-I FRD env subfamily. As to quaternary structure, the surface and transmembrane proteins form a heterodimer. They are attached by non-covalent interactions or by a labile interchain disulfide bond. In terms of processing, specific enzymatic cleavages in vivo yield the mature SU and TM proteins. Post-translationally, the CXXC motif is highly conserved across a broad range of retroviral envelope proteins. It is thought to participate in the formation of a labile disulfide bond possibly with the CX6CC motif present in the transmembrane protein.

The protein resides in the virion. It is found in the cell membrane. Functionally, this endogenous retroviral envelope protein has retained its original fusogenic properties and participates in trophoblast fusion and the formation of a syncytium during placenta morphogenesis. The interaction with MFSD2A is apparently important for this process. Its function is as follows. Endogenous envelope proteins may have kept, lost or modified their original function during evolution but this one can still make pseudotypes with MLV, HIV-1 or SIV-1 virions and confer infectivity. Retroviral envelope proteins mediate receptor recognition and membrane fusion during early infection. The surface protein mediates receptor recognition, while the transmembrane protein anchors the envelope heterodimer to the viral membrane through one transmembrane domain. The other hydrophobic domain, called fusion peptide, mediates fusion of the viral membrane with the target cell membrane. In Pongo pygmaeus (Bornean orangutan), this protein is Syncytin-2 (ERVFRD-1).